Here is a 156-residue protein sequence, read N- to C-terminus: Small ribosomal subunit protein uS7c (156 aa).

This sequence belongs to the universal ribosomal protein uS7 family. As to quaternary structure, part of the 30S ribosomal subunit.

It is found in the plastid. The protein localises to the chloroplast. Its function is as follows. One of the primary rRNA binding proteins, it binds directly to 16S rRNA where it nucleates assembly of the head domain of the 30S subunit. This is Small ribosomal subunit protein uS7c (rps7) from Euglena gracilis.